The chain runs to 113 residues: uncharacterized protein (113 aa).

2 helical membrane passes run 1–21 (MLIA…FGTW) and 48–68 (IMLA…ALIV).

This sequence to M.tuberculosis Rv0039.

It localises to the cell membrane. This is an uncharacterized protein from Mycobacterium leprae (strain TN).